A 296-amino-acid polypeptide reads, in one-letter code: Nucleotide-binding protein Pnec_1620 (296 aa).

An ATP-binding site is contributed by 8–15 (GISGSGKS). Position 57–60 (57–60 (DARR)) interacts with GTP.

Belongs to the RapZ-like family.

In terms of biological role, displays ATPase and GTPase activities. This is Nucleotide-binding protein Pnec_1620 from Polynucleobacter necessarius subsp. necessarius (strain STIR1).